Reading from the N-terminus, the 335-residue chain is Probable cytosolic iron-sulfur protein assembly protein Ciao1 (335 aa).

WD repeat units lie at residues 12-51 (GHKGRIWGVAWHPKGNVFASCGEDKAIRIWSLTGNTWGTK), 57-96 (GHKRTIREIRWSPCGQYLASASFDATTAIWSKSSGEFECN), 101-140 (GHENEVKSVSWSRSGGLLATCSRDKSVWIWEVAGDDEFEC), 146-185 (PHTQDVKRVVWHPTKDVLASASYDNTIKMFAEEPIDNDWD), 192-231 (SHTSTVWGIDFDADGERLVSCSDDTTIKIWRAYHPGNTAG), 250-289 (QHSRAIYDVSWCKLTGLIATACGDDGIRIFKETSDSKPDE), and 301-335 (AHDQDVNSVQWNPVVAGQLISCSDDGTIKIWKVSE).

It belongs to the WD repeat CIA1 family.

Functionally, essential component of the cytosolic iron-sulfur (Fe/S) protein assembly machinery. Required for the maturation of extramitochondrial Fe/S proteins. The sequence is that of Probable cytosolic iron-sulfur protein assembly protein Ciao1 from Drosophila sechellia (Fruit fly).